A 308-amino-acid polypeptide reads, in one-letter code: Beta-carotene hydroxylase 2, chloroplastic (308 aa).

The transit peptide at 1–59 (MAAARISFSSTSRTSYYRHSPFLGPKPTPTTPSVYPITPFSPNLGSILRCRRRPSFTVC) directs the protein to the chloroplast. The next 2 helical transmembrane spans lie at 105 to 125 (YLVA…MAVY) and 139 to 159 (FSEM…MEFW). One can recognise a Fatty acid hydroxylase domain in the interval 152–279 (AAVGMEFWAR…KFNGVPYGLF (128 aa)). Residues 164–169 (HKALWH) carry the Histidine box-1 motif. The Histidine box-2 signature appears at 176–180 (HESHH). A run of 2 helical transmembrane segments spans residues 191–211 (DVFA…GFFH) and 215–235 (IPGL…AYMF). The Histidine box-3 signature appears at 237–242 (HDGLVH). The Histidine box-4 signature appears at 263-267 (HSLHH).

Belongs to the sterol desaturase family.

Its subcellular location is the plastid. The protein resides in the chloroplast membrane. The catalysed reaction is all-trans-beta-carotene + 4 reduced [2Fe-2S]-[ferredoxin] + 2 O2 + 4 H(+) = all-trans-zeaxanthin + 4 oxidized [2Fe-2S]-[ferredoxin] + 2 H2O. It catalyses the reaction all-trans-beta-carotene + 2 reduced [2Fe-2S]-[ferredoxin] + O2 + 2 H(+) = beta-cryptoxanthin + 2 oxidized [2Fe-2S]-[ferredoxin] + H2O. It carries out the reaction beta-cryptoxanthin + 2 reduced [2Fe-2S]-[ferredoxin] + O2 + 2 H(+) = all-trans-zeaxanthin + 2 oxidized [2Fe-2S]-[ferredoxin] + H2O. Inhibited by o-phenanthroline and 8-hydroxyquinoline. Functionally, nonheme diiron monooxygenase involved in the biosynthesis of xanthophylls. Specific for beta-ring hydroxylations of beta-carotene. Produces beta-cryptoxanthin and zeaxanthin. Uses ferredoxin as an electron donor. The polypeptide is Beta-carotene hydroxylase 2, chloroplastic (Capsicum annuum (Capsicum pepper)).